We begin with the raw amino-acid sequence, 913 residues long: Collagen alpha-2(I) chain (913 aa).

Positions 1 to 913 (SGGFDFSFLP…FGYEGDFYRA (913 aa)) are disordered. Residues P10, P13, P35, and P41 each carry the 4-hydroxyproline modification. Composition is skewed to low complexity over residues 28–67 (LMGP…ARGP), 125–154 (VGAP…SAGP), and 199–220 (PGAN…AGAP). The span at 254–263 (GESGGKGEPG) shows a compositional bias: gly residues. A compositionally biased stretch (low complexity) spans 264–274 (SAGPQGPPGSS). Residues 281–303 (GPNGGSTGPTGPPGLRGGPGSRG) show a composition bias toward gly residues. A compositionally biased stretch (low complexity) spans 316 to 332 (PAGARGASGPAGVRGPS). P338 and P341 each carry 4-hydroxyproline. 2 stretches are compositionally biased toward low complexity: residues 367 to 386 (LPGI…RGEA) and 408 to 421 (PDGN…PGLQ). Residues 422-431 (GVQGGKGTTG) show a composition bias toward gly residues. 2 stretches are compositionally biased toward low complexity: residues 459–476 (PGES…SRGP) and 488–498 (EPGVVGAPGTA). The segment covering 499 to 517 (GPAGSGGPGERGAAGIPGG) has biased composition (gly residues). Composition is skewed to low complexity over residues 527 to 574 (RGEV…PRGS) and 581 to 601 (VGPA…QPGA). Residues 602–611 (KGERGTKGPK) show a composition bias toward basic and acidic residues. Residues 619–629 (PTGPVGSAGPA) are compositionally biased toward low complexity. Residues 639-648 (GSRGDGGPPG) show a composition bias toward gly residues. Residues 650–659 (TGFPGAAGRT) are compositionally biased toward low complexity. Residues 696 to 705 (GETGAGGPPG) are compositionally biased toward gly residues. Low complexity-rich tracts occupy residues 713 to 740 (SGEP…LGLP) and 748 to 758 (LPGVAGAVGEP). Positions 759–776 (GPLGIGPPGARGPSGAGK) are enriched in gly residues. The span at 782–797 (EPGPVGSVGPVGALGP) shows a compositional bias: low complexity. Residues 807–818 (RGDKGEPGEKGP) are compositionally biased toward basic and acidic residues. The segment covering 883 to 895 (SGPPGPPGPPGPP) has biased composition (pro residues).

This sequence belongs to the fibrillar collagen family. Trimers of one alpha 2(I) and two alpha 1(I) chains. Interacts (via C-terminus) with TMEM131 (via PapD-L domain); the interaction is direct and is involved in assembly and TRAPPIII ER-to-Golgi transport complex-dependent secretion of collagen. In terms of processing, prolines at the third position of the tripeptide repeating unit (G-X-Y) are hydroxylated in some or all of the chains. In terms of tissue distribution, expressed in bones.

Its subcellular location is the secreted. The protein resides in the extracellular space. It localises to the extracellular matrix. Its function is as follows. Type I collagen is a member of group I collagen (fibrillar forming collagen). In Parocnus serus (Greater Haitian ground sloth), this protein is Collagen alpha-2(I) chain.